We begin with the raw amino-acid sequence, 29 residues long: RVCPRILMECKKDSDCLAECVCLEHGYCG.

Disulfide bonds link Cys-3–Cys-20, Cys-10–Cys-22, and Cys-16–Cys-28.

Belongs to the protease inhibitor I7 (squash-type serine protease inhibitor) family.

It localises to the secreted. Functionally, inhibits trypsin. This is Trypsin inhibitor 1 from Cucurbita maxima (Pumpkin).